The primary structure comprises 203 residues: Orotate phosphoribosyltransferase (203 aa).

5-phospho-alpha-D-ribose 1-diphosphate contacts are provided by residues Arg-94, Lys-98, His-100, and 120-128; that span reads EDLISTGGS. Orotate is bound at residue Ser-124.

It belongs to the purine/pyrimidine phosphoribosyltransferase family. PyrE subfamily. Homodimer. Mg(2+) serves as cofactor.

The enzyme catalyses orotidine 5'-phosphate + diphosphate = orotate + 5-phospho-alpha-D-ribose 1-diphosphate. Its pathway is pyrimidine metabolism; UMP biosynthesis via de novo pathway; UMP from orotate: step 1/2. Its function is as follows. Catalyzes the transfer of a ribosyl phosphate group from 5-phosphoribose 1-diphosphate to orotate, leading to the formation of orotidine monophosphate (OMP). The chain is Orotate phosphoribosyltransferase from Staphylococcus aureus (strain Mu50 / ATCC 700699).